The sequence spans 372 residues: tRNA-specific 2-thiouridylase MnmA (372 aa).

ATP-binding positions include Gly16–Ser23 and Met42. The segment at Asn102–Asp104 is interaction with target base in tRNA. Cys107 acts as the Nucleophile in catalysis. Residues Cys107 and Cys205 are joined by a disulfide bond. Gly132 is an ATP binding site. The segment at Lys155–Gln157 is interaction with tRNA. Catalysis depends on Cys205, which acts as the Cysteine persulfide intermediate. An interaction with tRNA region spans residues Arg317–Tyr318.

This sequence belongs to the MnmA/TRMU family.

The protein localises to the cytoplasm. It carries out the reaction S-sulfanyl-L-cysteinyl-[protein] + uridine(34) in tRNA + AH2 + ATP = 2-thiouridine(34) in tRNA + L-cysteinyl-[protein] + A + AMP + diphosphate + H(+). Catalyzes the 2-thiolation of uridine at the wobble position (U34) of tRNA, leading to the formation of s(2)U34. This chain is tRNA-specific 2-thiouridylase MnmA, found in Shewanella sp. (strain MR-7).